Here is a 400-residue protein sequence, read N- to C-terminus: Transposase for insertion sequence element ISRM3 (400 aa).

Belongs to the transposase mutator family.

Functionally, required for the transposition of the insertion element. The protein is Transposase for insertion sequence element ISRM3 of Rhizobium meliloti (strain 1021) (Ensifer meliloti).